The sequence spans 397 residues: 1-deoxy-D-xylulose 5-phosphate reductoisomerase (397 aa).

Residues T17, G18, S19, I20, N47, and N130 each contribute to the NADPH site. K131 provides a ligand contact to 1-deoxy-D-xylulose 5-phosphate. E132 serves as a coordination point for NADPH. Residue D156 participates in Mn(2+) binding. S157, E158, S182, and H205 together coordinate 1-deoxy-D-xylulose 5-phosphate. E158 is a binding site for Mn(2+). G211 is a binding site for NADPH. S218, N223, K224, and E227 together coordinate 1-deoxy-D-xylulose 5-phosphate. E227 provides a ligand contact to Mn(2+).

Belongs to the DXR family. The cofactor is Mg(2+). Requires Mn(2+) as cofactor.

It catalyses the reaction 2-C-methyl-D-erythritol 4-phosphate + NADP(+) = 1-deoxy-D-xylulose 5-phosphate + NADPH + H(+). It participates in isoprenoid biosynthesis; isopentenyl diphosphate biosynthesis via DXP pathway; isopentenyl diphosphate from 1-deoxy-D-xylulose 5-phosphate: step 1/6. Functionally, catalyzes the NADPH-dependent rearrangement and reduction of 1-deoxy-D-xylulose-5-phosphate (DXP) to 2-C-methyl-D-erythritol 4-phosphate (MEP). This chain is 1-deoxy-D-xylulose 5-phosphate reductoisomerase, found in Allorhizobium ampelinum (strain ATCC BAA-846 / DSM 112012 / S4) (Agrobacterium vitis (strain S4)).